The sequence spans 430 residues: Tol-Pal system protein TolB (430 aa).

The first 21 residues, 1–21 (MKQALRVAFGFLMLWAAVLHA), serve as a signal peptide directing secretion.

The protein belongs to the TolB family. The Tol-Pal system is composed of five core proteins: the inner membrane proteins TolA, TolQ and TolR, the periplasmic protein TolB and the outer membrane protein Pal. They form a network linking the inner and outer membranes and the peptidoglycan layer.

The protein resides in the periplasm. In terms of biological role, part of the Tol-Pal system, which plays a role in outer membrane invagination during cell division and is important for maintaining outer membrane integrity. TolB occupies a key intermediary position in the Tol-Pal system because it communicates directly with both membrane-embedded components, Pal in the outer membrane and TolA in the inner membrane. The polypeptide is Tol-Pal system protein TolB (Salmonella enteritidis PT4 (strain P125109)).